A 326-amino-acid polypeptide reads, in one-letter code: MRPLMLQGHERSITQIKYNREGDLLFSCSKDQKPNVWYSLNGERLGTYDGHQGAVWCLDVDWESRKLITGAGDMTTKLWDVEYGTIIASIPTKSSVRTSNFSFSGNQAAYSTDKAMGQNCELFIIDVRNADSTLADQTPTLRIPMTESKITSMQWGPLDETIITGHDNGNIAIWDVRKGQKVVDSGSDHAAGINDMQLSKDGTMFVTASRDTTAKLFDSESLMCLKTYKTERPVNSAAISPILDHVVLGGGQDAMEVTTTSTKAGKFDSRFFHLIYEEEFARLKGHFGPINSLAFHPDGKSYASGGEDGFVRVQTFDSTYFENIFE.

WD repeat units follow at residues 8-47 (GHERSITQIKYNREGDLLFSCSKDQKPNVWYSLNGERLGT), 50-89 (GHQGAVWCLDVDWESRKLITGAGDMTTKLWDVEYGTIIAS), 145-184 (MTESKITSMQWGPLDETIITGHDNGNIAIWDVRKGQKVVD), 188-227 (DHAAGINDMQLSKDGTMFVTASRDTTAKLFDSESLMCLKT), and 285-326 (GHFG…NIFE).

This sequence belongs to the eIF-3 subunit I family. As to quaternary structure, component of the eukaryotic translation initiation factor 3 (eIF-3) complex. The eIF-3 complex interacts with pix.

It is found in the cytoplasm. Functionally, component of the eukaryotic translation initiation factor 3 (eIF-3) complex, which is involved in protein synthesis of a specialized repertoire of mRNAs and, together with other initiation factors, stimulates binding of mRNA and methionyl-tRNAi to the 40S ribosome. The eIF-3 complex specifically targets and initiates translation of a subset of mRNAs involved in cell proliferation. In Drosophila pseudoobscura pseudoobscura (Fruit fly), this protein is Eukaryotic translation initiation factor 3 subunit I.